The following is a 127-amino-acid chain: Large ribosomal subunit protein bL20 (127 aa).

This sequence belongs to the bacterial ribosomal protein bL20 family.

Binds directly to 23S ribosomal RNA and is necessary for the in vitro assembly process of the 50S ribosomal subunit. It is not involved in the protein synthesizing functions of that subunit. This chain is Large ribosomal subunit protein bL20 (rplT), found in Streptomyces coelicolor (strain ATCC BAA-471 / A3(2) / M145).